The primary structure comprises 609 residues: Dihydroxy-acid dehydratase (609 aa).

Asp-81 provides a ligand contact to Mg(2+). Cys-122 is a [2Fe-2S] cluster binding site. The Mg(2+) site is built by Asp-123 and Lys-124. Residue Lys-124 is modified to N6-carboxylysine. Residue Cys-195 participates in [2Fe-2S] cluster binding. Residue Glu-491 coordinates Mg(2+). Ser-517 (proton acceptor) is an active-site residue.

The protein belongs to the IlvD/Edd family. Homodimer. Requires [2Fe-2S] cluster as cofactor. The cofactor is Mg(2+).

It carries out the reaction (2R)-2,3-dihydroxy-3-methylbutanoate = 3-methyl-2-oxobutanoate + H2O. The enzyme catalyses (2R,3R)-2,3-dihydroxy-3-methylpentanoate = (S)-3-methyl-2-oxopentanoate + H2O. Its pathway is amino-acid biosynthesis; L-isoleucine biosynthesis; L-isoleucine from 2-oxobutanoate: step 3/4. It functions in the pathway amino-acid biosynthesis; L-valine biosynthesis; L-valine from pyruvate: step 3/4. Its function is as follows. Functions in the biosynthesis of branched-chain amino acids. Catalyzes the dehydration of (2R,3R)-2,3-dihydroxy-3-methylpentanoate (2,3-dihydroxy-3-methylvalerate) into 2-oxo-3-methylpentanoate (2-oxo-3-methylvalerate) and of (2R)-2,3-dihydroxy-3-methylbutanoate (2,3-dihydroxyisovalerate) into 2-oxo-3-methylbutanoate (2-oxoisovalerate), the penultimate precursor to L-isoleucine and L-valine, respectively. This is Dihydroxy-acid dehydratase from Acinetobacter baumannii (strain AB0057).